The sequence spans 192 residues: uncharacterized protein (192 aa).

This is an uncharacterized protein from Methanocaldococcus jannaschii (strain ATCC 43067 / DSM 2661 / JAL-1 / JCM 10045 / NBRC 100440) (Methanococcus jannaschii).